Reading from the N-terminus, the 692-residue chain is Putative ESX-1 scaffolding and assembly protein SaeA (692 aa).

The span at 1-21 shows a compositional bias: basic and acidic residues; that stretch reads MGERGELVSDLHPSDDHDADP. Disordered stretches follow at residues 1 to 23 and 87 to 134; these read MGER…DPRL and PAAP…TTGF. The span at 89–107 shows a compositional bias: pro residues; sequence APEPDPPPVPEPQPEPEPG.

It is found in the cytoplasm. Functionally, may be involved in assembly of the ESX-1 / type VII specialized secretion system (T7SS), which exports several proteins including EsxA and EsxB. Involved in DNA conjugation in recipient (MKD8) but not donor (mc(2)155) strain. The protein is Putative ESX-1 scaffolding and assembly protein SaeA of Mycolicibacterium smegmatis (strain ATCC 700084 / mc(2)155) (Mycobacterium smegmatis).